Reading from the N-terminus, the 385-residue chain is Glucans biosynthesis protein C (385 aa).

10 helical membrane-spanning segments follow: residues 17–37, 60–80, 91–111, 137–157, 173–193, 212–232, 239–259, 274–294, 311–331, and 338–358; these read AWLM…SHTW, MQVF…RYPL, VGIP…IMLQ, ISHL…VWIF, KFSM…YAVI, FIVM…LAFI, LFTT…VAYL, TESV…FSFG, ASLF…AYIT, and WLGF…LYEI.

This sequence belongs to the acyltransferase 3 family. OpgC subfamily.

The protein resides in the cell membrane. The protein operates within glycan metabolism; osmoregulated periplasmic glucan (OPG) biosynthesis. Necessary for the succinyl substitution of periplasmic glucans. Could catalyze the transfer of succinyl residues from the cytoplasmic side of the membrane to the nascent glucan backbones on the periplasmic side of the membrane. The sequence is that of Glucans biosynthesis protein C from Escherichia coli O6:K15:H31 (strain 536 / UPEC).